A 546-amino-acid polypeptide reads, in one-letter code: Chaperonin GroEL (546 aa).

ATP is bound by residues 30 to 33, Lys-51, 87 to 91, Gly-415, 479 to 481, and Asp-495; these read TLGP, DGTTT, and NAA.

This sequence belongs to the chaperonin (HSP60) family. In terms of assembly, forms a cylinder of 14 subunits composed of two heptameric rings stacked back-to-back. Interacts with the co-chaperonin GroES.

The protein localises to the cytoplasm. The catalysed reaction is ATP + H2O + a folded polypeptide = ADP + phosphate + an unfolded polypeptide.. Together with its co-chaperonin GroES, plays an essential role in assisting protein folding. The GroEL-GroES system forms a nano-cage that allows encapsulation of the non-native substrate proteins and provides a physical environment optimized to promote and accelerate protein folding. The polypeptide is Chaperonin GroEL (Xanthomonas axonopodis pv. citri (strain 306)).